The primary structure comprises 452 residues: Neuromedin-K receptor (452 aa).

Residues 1–71 (MASVPTGENW…TNQFVQPSWR (71 aa)) are Extracellular-facing. N-linked (GlcNAc...) asparagine glycans are attached at residues Asn9, Asn23, Asn40, and Asn60. Residues 72–94 (IALWSLAYGLVVAVAVFGNLIVI) form a helical membrane-spanning segment. At 95–104 (WIILAHKRMR) the chain is on the cytoplasmic side. The chain crosses the membrane as a helical span at residues 105 to 126 (TVTNYFLVNLAFSDASVAAFNT). At 127–146 (LVNFIYGVHSEWYFGANYCR) the chain is on the extracellular side. Cys145 and Cys220 are joined by a disulfide. A helical membrane pass occupies residues 147 to 168 (FQNFFPITAVFASIYSMTAIAV). At 169–188 (DRYMAIIDPLKPRLSATATK) the chain is on the cytoplasmic side. Residues 189-209 (IVIGSIWILAFLLAFPQCLYS) traverse the membrane as a helical segment. Residues 210–232 (KIKVMPGRTLCYVQWPEGPKQHF) lie on the Extracellular side of the membrane. Residues 233 to 257 (TYHIIVIILVYCFPLLIMGVTYTIV) form a helical membrane-spanning segment. The Cytoplasmic portion of the chain corresponds to 258–286 (GITLWGGEIPGDTCDKYHEQLKAKRKVVK). The chain crosses the membrane as a helical span at residues 287 to 308 (MMIIVVVTFAICWLPYHVYFIL). Residues 309–321 (TAIYQQLNRWKYI) lie on the Extracellular side of the membrane. Residues 322–346 (QQVYLASFWLAMSSTMYNPIIYCCL) form a helical membrane-spanning segment. Over 347-452 (NKRFRAGFKR…SPYTSVDEYS (106 aa)) the chain is Cytoplasmic. A lipid anchor (S-palmitoyl cysteine) is attached at Cys361. Residues 401 to 452 (DPSEGDPAKSSRKKRAVPRDPSANGCSHREFKSASTTSSFISSPYTSVDEYS) are disordered. The segment covering 433–452 (SASTTSSFISSPYTSVDEYS) has biased composition (low complexity).

The protein belongs to the G-protein coupled receptor 1 family. The anchoring of this receptor to the plasma membrane is probably mediated by the palmitoylation of a cysteine residue.

It is found in the cell membrane. This is a receptor for the tachykinin neuropeptide neuromedin-K (neurokinin B). It is associated with G proteins that activate a phosphatidylinositol-calcium second messenger system. The protein is Neuromedin-K receptor (Tacr3) of Mus musculus (Mouse).